The chain runs to 547 residues: CTP synthase (547 aa).

The amidoligase domain stretch occupies residues 1–267; sequence MTKFVFVTGG…AQQTLALLNL (267 aa). Ser-13 is a binding site for CTP. Ser-13 serves as a coordination point for UTP. Residues 14–19 and Asp-71 each bind ATP; that span reads SIGKGI. Residues Asp-71 and Glu-141 each coordinate Mg(2+). CTP is bound by residues 148–150, 188–193, and Lys-224; these read DIE and KTKPTQ. UTP contacts are provided by residues 188-193 and Lys-224; that span reads KTKPTQ. One can recognise a Glutamine amidotransferase type-1 domain in the interval 292–534; it reads EIALVGKYVQ…VKAAVDHYST (243 aa). Residue Gly-354 coordinates L-glutamine. The active-site Nucleophile; for glutamine hydrolysis is Cys-381. Residues 382 to 385, Glu-405, and Arg-462 contribute to the L-glutamine site; that span reads LGMQ. Residues His-507 and Glu-509 contribute to the active site.

It belongs to the CTP synthase family. As to quaternary structure, homotetramer.

It carries out the reaction UTP + L-glutamine + ATP + H2O = CTP + L-glutamate + ADP + phosphate + 2 H(+). The enzyme catalyses L-glutamine + H2O = L-glutamate + NH4(+). It catalyses the reaction UTP + NH4(+) + ATP = CTP + ADP + phosphate + 2 H(+). The protein operates within pyrimidine metabolism; CTP biosynthesis via de novo pathway; CTP from UDP: step 2/2. Its activity is regulated as follows. Allosterically activated by GTP, when glutamine is the substrate; GTP has no effect on the reaction when ammonia is the substrate. The allosteric effector GTP functions by stabilizing the protein conformation that binds the tetrahedral intermediate(s) formed during glutamine hydrolysis. Inhibited by the product CTP, via allosteric rather than competitive inhibition. Catalyzes the ATP-dependent amination of UTP to CTP with either L-glutamine or ammonia as the source of nitrogen. Regulates intracellular CTP levels through interactions with the four ribonucleotide triphosphates. The sequence is that of CTP synthase from Rippkaea orientalis (strain PCC 8801 / RF-1) (Cyanothece sp. (strain PCC 8801)).